The sequence spans 290 residues: ATP synthase gamma chain (290 aa).

This sequence belongs to the ATPase gamma chain family. F-type ATPases have 2 components, CF(1) - the catalytic core - and CF(0) - the membrane proton channel. CF(1) has five subunits: alpha(3), beta(3), gamma(1), delta(1), epsilon(1). CF(0) has three main subunits: a, b and c.

It localises to the cell inner membrane. Its function is as follows. Produces ATP from ADP in the presence of a proton gradient across the membrane. The gamma chain is believed to be important in regulating ATPase activity and the flow of protons through the CF(0) complex. The protein is ATP synthase gamma chain of Amoebophilus asiaticus (strain 5a2).